A 285-amino-acid chain; its full sequence is Pantothenate synthetase (285 aa).

Residue 30 to 37 (MGFLHEGH) coordinates ATP. His37 acts as the Proton donor in catalysis. Gln61 lines the (R)-pantoate pocket. Gln61 is a beta-alanine binding site. Residue 147–150 (GQKD) coordinates ATP. Gln153 lines the (R)-pantoate pocket. Residues Val176 and 184-187 (KSSR) contribute to the ATP site.

Belongs to the pantothenate synthetase family. In terms of assembly, homodimer.

The protein resides in the cytoplasm. It catalyses the reaction (R)-pantoate + beta-alanine + ATP = (R)-pantothenate + AMP + diphosphate + H(+). It functions in the pathway cofactor biosynthesis; (R)-pantothenate biosynthesis; (R)-pantothenate from (R)-pantoate and beta-alanine: step 1/1. Catalyzes the condensation of pantoate with beta-alanine in an ATP-dependent reaction via a pantoyl-adenylate intermediate. The chain is Pantothenate synthetase from Listeria innocua serovar 6a (strain ATCC BAA-680 / CLIP 11262).